A 60-amino-acid chain; its full sequence is Cytochrome c oxidase subunit 9, mitochondrial (60 aa).

Topologically, residues 1 to 15 are mitochondrial matrix; it reads MSAIAPITGTIRKRI. A helical transmembrane segment spans residues 16 to 38; the sequence is LADITIGFAIGGAMASYWWWGFH. Topologically, residues 39-57 are mitochondrial intermembrane; the sequence is KNIINKREAYYAKLAEQKA. A propeptide spans 58–60 (removed in mature form); it reads AEN.

The protein belongs to the fungal cytochrome c oxidase subunit 7a family. As to quaternary structure, component of the cytochrome c oxidase (complex IV, CIV), a multisubunit enzyme composed of a catalytic core of 3 subunits and several supernumerary subunits. The complex exists as a monomer or a dimer and forms supercomplexes (SCs) in the inner mitochondrial membrane with ubiquinol-cytochrome c oxidoreductase (cytochrome b-c1 complex, complex III, CIII).

It localises to the mitochondrion inner membrane. Its pathway is energy metabolism; oxidative phosphorylation. Component of the cytochrome c oxidase, the last enzyme in the mitochondrial electron transport chain which drives oxidative phosphorylation. The respiratory chain contains 3 multisubunit complexes succinate dehydrogenase (complex II, CII), ubiquinol-cytochrome c oxidoreductase (cytochrome b-c1 complex, complex III, CIII) and cytochrome c oxidase (complex IV, CIV), that cooperate to transfer electrons derived from NADH and succinate to molecular oxygen, creating an electrochemical gradient over the inner membrane that drives transmembrane transport and the ATP synthase. Cytochrome c oxidase is the component of the respiratory chain that catalyzes the reduction of oxygen to water. Electrons originating from reduced cytochrome c in the intermembrane space (IMS) are transferred via the dinuclear copper A center (CU(A)) of subunit 2 and heme A of subunit 1 to the active site in subunit 1, a binuclear center (BNC) formed by heme A3 and copper B (CU(B)). The BNC reduces molecular oxygen to 2 water molecules using 4 electrons from cytochrome c in the IMS and 4 protons from the mitochondrial matrix. The sequence is that of Cytochrome c oxidase subunit 9, mitochondrial (COX9) from Kluyveromyces lactis (strain ATCC 8585 / CBS 2359 / DSM 70799 / NBRC 1267 / NRRL Y-1140 / WM37) (Yeast).